Reading from the N-terminus, the 635-residue chain is Chaperone protein HtpG (635 aa).

Residues 1–346 are a; substrate-binding; that stretch reads MSQTTTTSAS…SADLPLNVSR (346 aa). Positions 347-563 are b; it reads EILQESRDVR…QNELSPHLLR (217 aa). A c region spans residues 564-635; that stretch reads MLKAAGQEAP…KRLNGLLLKA (72 aa).

This sequence belongs to the heat shock protein 90 family. In terms of assembly, homodimer.

It localises to the cytoplasm. In terms of biological role, molecular chaperone. Has ATPase activity. This Bordetella pertussis (strain Tohama I / ATCC BAA-589 / NCTC 13251) protein is Chaperone protein HtpG.